The sequence spans 341 residues: Methionine import ATP-binding protein MetN (341 aa).

The ABC transporter domain maps to I2 to V241. G38–S45 serves as a coordination point for ATP.

Belongs to the ABC transporter superfamily. Methionine importer (TC 3.A.1.24) family. The complex is composed of two ATP-binding proteins (MetN), two transmembrane proteins (MetI) and a solute-binding protein (MetQ).

It localises to the cell membrane. The catalysed reaction is L-methionine(out) + ATP + H2O = L-methionine(in) + ADP + phosphate + H(+). It catalyses the reaction D-methionine(out) + ATP + H2O = D-methionine(in) + ADP + phosphate + H(+). In terms of biological role, part of the ABC transporter complex MetNIQ involved in methionine import. Responsible for energy coupling to the transport system. This is Methionine import ATP-binding protein MetN from Staphylococcus saprophyticus subsp. saprophyticus (strain ATCC 15305 / DSM 20229 / NCIMB 8711 / NCTC 7292 / S-41).